A 138-amino-acid polypeptide reads, in one-letter code: Transcription antitermination protein NusB (138 aa).

It belongs to the NusB family.

In terms of biological role, involved in transcription antitermination. Required for transcription of ribosomal RNA (rRNA) genes. Binds specifically to the boxA antiterminator sequence of the ribosomal RNA (rrn) operons. The sequence is that of Transcription antitermination protein NusB from Blochmanniella floridana.